Consider the following 254-residue polypeptide: NAD-dependent glycerol dehydrogenase (254 aa).

18-47 lines the NAD(+) pocket; the sequence is VVTGAASGIGKAMAELFSEKGAYVVLLDIK. The active-site Proton acceptor is the Y160. Position 164 (K164) interacts with NAD(+).

This sequence belongs to the short-chain dehydrogenases/reductases (SDR) family. The cofactor is Mg(2+). Requires Mn(2+) as cofactor.

The protein resides in the cytoplasm. The catalysed reaction is glycerol + NAD(+) = dihydroxyacetone + NADH + H(+). Inhibited by Zn(2+). Functionally, involved in the glycerol metabolism. Catalyzes the NAD-dependent oxidation of glycerol to dihydroxyacetone (glycerone). GolD specifically uses NAD. The sequence is that of NAD-dependent glycerol dehydrogenase from Listeria innocua serovar 6a (strain ATCC BAA-680 / CLIP 11262).